The primary structure comprises 670 residues: DNA ligase (670 aa).

NAD(+)-binding positions include 32–36 (DAEYD), 81–82 (SL), and Glu-113. Lys-115 acts as the N6-AMP-lysine intermediate in catalysis. 4 residues coordinate NAD(+): Arg-136, Glu-173, Lys-290, and Lys-314. Positions 408, 411, 426, and 432 each coordinate Zn(2+). Residues 592–670 (ESDSPFAGKT…EAEMIRLLGE (79 aa)) form the BRCT domain.

This sequence belongs to the NAD-dependent DNA ligase family. LigA subfamily. It depends on Mg(2+) as a cofactor. Requires Mn(2+) as cofactor.

The enzyme catalyses NAD(+) + (deoxyribonucleotide)n-3'-hydroxyl + 5'-phospho-(deoxyribonucleotide)m = (deoxyribonucleotide)n+m + AMP + beta-nicotinamide D-nucleotide.. In terms of biological role, DNA ligase that catalyzes the formation of phosphodiester linkages between 5'-phosphoryl and 3'-hydroxyl groups in double-stranded DNA using NAD as a coenzyme and as the energy source for the reaction. It is essential for DNA replication and repair of damaged DNA. This chain is DNA ligase, found in Yersinia pestis bv. Antiqua (strain Antiqua).